Consider the following 85-residue polypeptide: Small ribosomal subunit protein bS20 (85 aa).

The protein belongs to the bacterial ribosomal protein bS20 family.

Its function is as follows. Binds directly to 16S ribosomal RNA. This chain is Small ribosomal subunit protein bS20, found in Borreliella afzelii (strain PKo) (Borrelia afzelii).